We begin with the raw amino-acid sequence, 64 residues long: Prokaryotic ubiquitin-like protein Pup (64 aa).

Residues 1-11 (MAQEQTKRTGG) show a composition bias toward basic and acidic residues. A disordered region spans residues 1 to 37 (MAQEQTKRTGGGDEDDTPGADGAAGQERREKLAEDTD). An ARC ATPase binding region spans residues 21–58 (DGAAGQERREKLAEDTDDLLDEIDDVLEENAEDFVRAY). Residues 24-52 (AGQERREKLAEDTDDLLDEIDDVLEENAE) adopt a coiled-coil conformation. Deamidated glutamine is present on Gln64. Residue Gln64 forms an Isoglutamyl lysine isopeptide (Gln-Lys) (interchain with K-? in acceptor proteins) linkage.

It belongs to the prokaryotic ubiquitin-like protein family. In terms of assembly, strongly interacts with the proteasome-associated ATPase ARC through a hydrophobic interface; the interacting region of Pup lies in its C-terminal half. There is one Pup binding site per ARC hexamer ring. Post-translationally, is modified by deamidation of its C-terminal glutamine to glutamate by the deamidase Dop, a prerequisite to the subsequent pupylation process.

The protein operates within protein degradation; proteasomal Pup-dependent pathway. Protein modifier that is covalently attached to lysine residues of substrate proteins, thereby targeting them for proteasomal degradation. The tagging system is termed pupylation. The chain is Prokaryotic ubiquitin-like protein Pup from Rhodococcus jostii (strain RHA1).